A 439-amino-acid polypeptide reads, in one-letter code: Deacetylvindoline O-acetyltransferase (439 aa).

The active-site Proton acceptor is His158. The stretch at 317–344 forms a coiled coil; the sequence is TKLVINELRKEKQKIKNLSREKLTYVAQ. The active-site Proton acceptor is Asp380.

It belongs to the plant acyltransferase family. In terms of assembly, monomer. In terms of tissue distribution, predominantly expressed in young leaves of mature plants. Low expression in stems and flowers and not detected in roots. Confined to the laticifer and idioblast cells of leaves, stems, and flower buds.

Its subcellular location is the cytoplasm. The protein resides in the nucleus. The catalysed reaction is 4-O-deacetylvindoline + acetyl-CoA = vindoline + CoA. Its pathway is alkaloid biosynthesis; vindoline biosynthesis. Functionally, involved in the biosynthesis of vindoline, a precursor of vinblastine and vincristine. The chain is Deacetylvindoline O-acetyltransferase from Catharanthus roseus (Madagascar periwinkle).